The chain runs to 335 residues: Glyceraldehyde-3-phosphate dehydrogenase (335 aa).

Residues arginine 12 to isoleucine 13, aspartate 34, and lysine 79 contribute to the NAD(+) site. Residues serine 150–threonine 152, threonine 181, threonine 210–glycine 211, and arginine 233 each bind D-glyceraldehyde 3-phosphate. Cysteine 151 functions as the Nucleophile in the catalytic mechanism. Asparagine 315 contacts NAD(+).

The protein belongs to the glyceraldehyde-3-phosphate dehydrogenase family. As to quaternary structure, homotetramer.

Its subcellular location is the cytoplasm. The enzyme catalyses D-glyceraldehyde 3-phosphate + phosphate + NAD(+) = (2R)-3-phospho-glyceroyl phosphate + NADH + H(+). It participates in carbohydrate degradation; glycolysis; pyruvate from D-glyceraldehyde 3-phosphate: step 1/5. In Debaryomyces hansenii (strain ATCC 36239 / CBS 767 / BCRC 21394 / JCM 1990 / NBRC 0083 / IGC 2968) (Yeast), this protein is Glyceraldehyde-3-phosphate dehydrogenase (GPD).